A 133-amino-acid polypeptide reads, in one-letter code: Small ribosomal subunit protein uS8 (133 aa).

The protein belongs to the universal ribosomal protein uS8 family. As to quaternary structure, part of the 30S ribosomal subunit. Contacts proteins S5 and S12.

In terms of biological role, one of the primary rRNA binding proteins, it binds directly to 16S rRNA central domain where it helps coordinate assembly of the platform of the 30S subunit. This chain is Small ribosomal subunit protein uS8, found in Crocosphaera subtropica (strain ATCC 51142 / BH68) (Cyanothece sp. (strain ATCC 51142)).